Reading from the N-terminus, the 775-residue chain is Tyrosine-protein phosphatase non-receptor type 12 (775 aa).

M1 bears the N-acetylmethionine mark. The residue at position 19 (S19) is a Phosphoserine. The region spanning F28–L293 is the Tyrosine-protein phosphatase domain. Substrate is bound by residues D199, C231–R237, and Q278. C231 acts as the Phosphocysteine intermediate in catalysis. The disordered stretch occupies residues S322 to S341. Phosphoserine occurs at positions 331, 434, 448, and 467. Positions V344–I437 are interaction with TGFB1I1. Residues K462–T775 form a disordered region. T519 is subject to Phosphothreonine. Phosphoserine occurs at positions 550 and 567. Positions N558–T573 are enriched in polar residues. A Phosphothreonine modification is found at T569. Phosphoserine is present on S596. Position 598 is a phosphothreonine (T598). 4 positions are modified to phosphoserine: S603, S606, S608, and S613. Positions T622 to A640 are enriched in low complexity. The residue at position 673 (S673) is a Phosphoserine. Over residues V692–E711 the composition is skewed to basic and acidic residues. A Phosphoserine modification is found at S748. A compositionally biased stretch (basic and acidic residues) spans G766 to T775.

Belongs to the protein-tyrosine phosphatase family. Non-receptor class 4 subfamily. As to quaternary structure, interacts with PSTPIP1 and TGFB1I1. Interacts with PTK2B/PYK2. Interacts with LPXN. Interacts with SORBS2; this interaction greatly enhances WASF1 dephosphorylation and might mediate partial translocation to focal adhesion sites. In terms of processing, phosphorylated by STK24/MST3 and this results in inhibition of its activity.

Its subcellular location is the cytoplasm. The protein resides in the cell junction. The protein localises to the focal adhesion. It is found in the cell projection. It localises to the podosome. It carries out the reaction O-phospho-L-tyrosyl-[protein] + H2O = L-tyrosyl-[protein] + phosphate. In terms of biological role, dephosphorylates a range of proteins, and thereby regulates cellular signaling cascades. Dephosphorylates cellular tyrosine kinases, such as ERBB2 and PTK2B/PYK2, and thereby regulates signaling via ERBB2 and PTK2B/PYK2. Selectively dephosphorylates ERBB2 phosphorylated at 'Tyr-1112', 'Tyr-1196', and/or 'Tyr-1248'. This chain is Tyrosine-protein phosphatase non-receptor type 12 (Ptpn12), found in Mus musculus (Mouse).